A 380-amino-acid chain; its full sequence is Erythronate-4-phosphate dehydrogenase (380 aa).

Residues Ser45 and Thr66 each contribute to the substrate site. Residues Asp146, Thr174, 205 to 207, and Asp231 contribute to the NAD(+) site; that span reads ASR. Residue Arg207 is part of the active site. Residue Glu236 is part of the active site. The active-site Proton donor is the His253. Position 256 (Gly256) interacts with NAD(+). Residue Tyr257 participates in substrate binding.

It belongs to the D-isomer specific 2-hydroxyacid dehydrogenase family. PdxB subfamily. Homodimer.

It localises to the cytoplasm. It catalyses the reaction 4-phospho-D-erythronate + NAD(+) = (R)-3-hydroxy-2-oxo-4-phosphooxybutanoate + NADH + H(+). Its pathway is cofactor biosynthesis; pyridoxine 5'-phosphate biosynthesis; pyridoxine 5'-phosphate from D-erythrose 4-phosphate: step 2/5. In terms of biological role, catalyzes the oxidation of erythronate-4-phosphate to 3-hydroxy-2-oxo-4-phosphonooxybutanoate. This chain is Erythronate-4-phosphate dehydrogenase, found in Pseudomonas fluorescens (strain SBW25).